The sequence spans 93 residues: Integration host factor subunit beta (93 aa).

The protein belongs to the bacterial histone-like protein family. Heterodimer of an alpha and a beta chain.

Its function is as follows. This protein is one of the two subunits of integration host factor, a specific DNA-binding protein that functions in genetic recombination as well as in transcriptional and translational control. This chain is Integration host factor subunit beta (ihfB), found in Mannheimia haemolytica (Pasteurella haemolytica).